Reading from the N-terminus, the 117-residue chain is Hydrogenase maturation factor HypA (117 aa).

H2 lines the Ni(2+) pocket. Residues C73, C76, C92, and C95 each contribute to the Zn(2+) site.

Belongs to the HypA/HybF family.

Its function is as follows. Involved in the maturation of [NiFe] hydrogenases. Required for nickel insertion into the metal center of the hydrogenase. The chain is Hydrogenase maturation factor HypA from Solidesulfovibrio magneticus (strain ATCC 700980 / DSM 13731 / RS-1) (Desulfovibrio magneticus).